The primary structure comprises 512 residues: MGELRFKHLFWGSFVESGGTFQTVLIFLLIPCSLTVDYRAAPILSNTTFLWIWNVPTERCVGNVNDPIDLSFFSLIGSPRKTATGQPVTLFYVDRLGLYPHIDANQAEHYGGIPQRGDYQAHLRKAKTDIEHYIPDDKLGLAIIDWEEWRPTWLRNWKPKDNYRNKSIELVQSTNPGLSITEATQKAIQQFEEAGRKFMEGTLHLGKFLRPNQLWGYYLFPDCYNNKFQDPKYDGQCPAVEKKRNDNLKWLWKASTGLYPSVYLKKDLKSNRQATLYVRYRVVEAIRVSKVGNASDPVPIFVYIRLVFTDRTSEYLLEDDLVNTIGEIVALGTSGIIIWDAMSLAQRAAGCPILHKYMQTTLNPYIVNVTLAAKMCSQTLCNEKGMCSRRKESSDVYLHLNPSHFDIMLTETGKYEVLGNPRVGDLEYFSEHFKCSCFSRMTCKETSDVKNVQDVNVCVGDNVCIKAKVEPNPAFYLLPGKSLLFMTTLGHVLYHLPQDIFVFPRKTLVSTP.

The signal sequence occupies residues Met1–Thr35. N-linked (GlcNAc...) asparagine glycosylation occurs at Asn46. Cystine bridges form between Cys60–Cys351 and Cys223–Cys237. Glu147 functions as the Proton donor in the catalytic mechanism. Asn165 carries N-linked (GlcNAc...) asparagine glycosylation. 2 N-linked (GlcNAc...) asparagine glycosylation sites follow: Asn293 and Asn368. Disulfide bonds link Cys376–Cys387, Cys381–Cys435, and Cys437–Cys464.

The protein belongs to the glycosyl hydrolase 56 family.

The protein resides in the cell membrane. It catalyses the reaction Random hydrolysis of (1-&gt;4)-linkages between N-acetyl-beta-D-glucosamine and D-glucuronate residues in hyaluronate.. Functionally, involved in sperm-egg adhesion. Upon fertilization sperm must first penetrate a layer of cumulus cells that surrounds the egg before reaching the zona pellucida. The cumulus cells are embedded in a matrix containing hyaluronic acid which is formed prior to ovulation. This protein aids in penetrating the layer of cumulus cells by digesting hyaluronic acid. The chain is Hyaluronidase PH-20 (Spam1) from Mus musculus (Mouse).